Reading from the N-terminus, the 127-residue chain is Large ribosomal subunit protein bL12 (127 aa).

The protein belongs to the bacterial ribosomal protein bL12 family. Homodimer. Part of the ribosomal stalk of the 50S ribosomal subunit. Forms a multimeric L10(L12)X complex, where L10 forms an elongated spine to which 2 to 4 L12 dimers bind in a sequential fashion. Binds GTP-bound translation factors.

Its function is as follows. Forms part of the ribosomal stalk which helps the ribosome interact with GTP-bound translation factors. Is thus essential for accurate translation. The chain is Large ribosomal subunit protein bL12 from Thiobacillus denitrificans (strain ATCC 25259 / T1).